The following is a 312-amino-acid chain: 1-(5-phosphoribosyl)-5-[(5-phosphoribosylamino)methylideneamino] imidazole-4-carboxamide isomerase HISN3, chloroplastic (312 aa).

The transit peptide at Met1–Val67 directs the protein to the chloroplast. Asp57 is a binding site for 1-(5-phospho-beta-D-ribosyl)-5-[(5-phospho-beta-D-ribosylamino)methylideneamino]imidazole-4-carboxamide. Position 65 (Gln65) interacts with 5-[(5-phospho-1-deoxy-D-ribulos-1-ylimino)methylamino]-1-(5-phospho-beta-D-ribosyl)imidazole-4-carboxamide. 2 residues coordinate Na(+): Gln65 and Ile66. Position 68 (Gly68) interacts with 1-(5-phospho-beta-D-ribosyl)-5-[(5-phospho-beta-D-ribosylamino)methylideneamino]imidazole-4-carboxamide. Residues His108, Gly138, Thr158, and Ser159 each contribute to the 5-[(5-phospho-1-deoxy-D-ribulos-1-ylimino)methylamino]-1-(5-phospho-beta-D-ribosyl)imidazole-4-carboxamide site. 3 residues coordinate 1-(5-phospho-beta-D-ribosyl)-5-[(5-phospho-beta-D-ribosylamino)methylideneamino]imidazole-4-carboxamide: Gly138, Thr158, and Ser159. Residues Ser159 and Phe162 each contribute to the Na(+) site. Positions 187, 203, 204, and 230 each coordinate 1-(5-phospho-beta-D-ribosyl)-5-[(5-phospho-beta-D-ribosylamino)methylideneamino]imidazole-4-carboxamide. Asp187 contacts 5-[(5-phospho-1-deoxy-D-ribulos-1-ylimino)methylamino]-1-(5-phospho-beta-D-ribosyl)imidazole-4-carboxamide. Trp204 contributes to the 5-[(5-phospho-1-deoxy-D-ribulos-1-ylimino)methylamino]-1-(5-phospho-beta-D-ribosyl)imidazole-4-carboxamide binding site. Position 235 (Glu235) interacts with Na(+). Residues Gly236, Gly262, Gly285, and Ser286 each coordinate 1-(5-phospho-beta-D-ribosyl)-5-[(5-phospho-beta-D-ribosylamino)methylideneamino]imidazole-4-carboxamide. Positions 236, 262, 285, and 286 each coordinate 5-[(5-phospho-1-deoxy-D-ribulos-1-ylimino)methylamino]-1-(5-phospho-beta-D-ribosyl)imidazole-4-carboxamide.

It belongs to the HisA/HisF family. Requires Na(+) as cofactor.

Its subcellular location is the plastid. It localises to the chloroplast. It carries out the reaction 1-(5-phospho-beta-D-ribosyl)-5-[(5-phospho-beta-D-ribosylamino)methylideneamino]imidazole-4-carboxamide = 5-[(5-phospho-1-deoxy-D-ribulos-1-ylimino)methylamino]-1-(5-phospho-beta-D-ribosyl)imidazole-4-carboxamide. The protein operates within amino-acid biosynthesis; L-histidine biosynthesis; L-histidine from 5-phospho-alpha-D-ribose 1-diphosphate: step 4/9. In terms of biological role, component of the histidine biosynthesis pathway that catalyzes the isomerization of 5'-ProFAR (pro-phosphoribosyl formimino-5-aminoimidazole-4-carboxamide ribonucleotide, referred as 1-(5-phospho-beta-D-ribosyl)-5-[(5-phospho-beta-D-ribosylamino)methylideneamino]imidazole-4-carboxamide) to PrFAR (phosphoribulosyl formimino-5-aminoimidazole-4-carboxamide ribonucleotide, referred as 5-[(5-phospho-1-deoxy-D-ribulos-1-ylimino)methylamino]-1-(5-phospho-beta-D-ribosyl)imidazole-4-carboxamide). The protein is 1-(5-phosphoribosyl)-5-[(5-phosphoribosylamino)methylideneamino] imidazole-4-carboxamide isomerase HISN3, chloroplastic of Medicago truncatula (Barrel medic).